Reading from the N-terminus, the 213-residue chain is Glycerol-3-phosphate acyltransferase (213 aa).

The next 5 helical transmembrane spans lie at 3–23 (ILLAALVAYLIGSVSFAVVVS), 51–71 (KAAILTLVGDAFKGWIAVWLA), 78–98 (DVAVAWVAIAVFLGHLYPVFF), 115–135 (AVHPVLGLATALTWLIVAFFF), and 140–160 (LAALVAAVFAPVFDVFLFGTP).

It belongs to the PlsY family. Probably interacts with PlsX.

The protein resides in the cell inner membrane. The enzyme catalyses an acyl phosphate + sn-glycerol 3-phosphate = a 1-acyl-sn-glycero-3-phosphate + phosphate. The protein operates within lipid metabolism; phospholipid metabolism. Its function is as follows. Catalyzes the transfer of an acyl group from acyl-phosphate (acyl-PO(4)) to glycerol-3-phosphate (G3P) to form lysophosphatidic acid (LPA). This enzyme utilizes acyl-phosphate as fatty acyl donor, but not acyl-CoA or acyl-ACP. The chain is Glycerol-3-phosphate acyltransferase from Burkholderia cenocepacia (strain ATCC BAA-245 / DSM 16553 / LMG 16656 / NCTC 13227 / J2315 / CF5610) (Burkholderia cepacia (strain J2315)).